Reading from the N-terminus, the 183-residue chain is Peptide deformylase (183 aa).

Fe cation contacts are provided by cysteine 110 and histidine 153. The active site involves glutamate 154. Histidine 157 contacts Fe cation.

It belongs to the polypeptide deformylase family. Fe(2+) is required as a cofactor.

The catalysed reaction is N-terminal N-formyl-L-methionyl-[peptide] + H2O = N-terminal L-methionyl-[peptide] + formate. In terms of biological role, removes the formyl group from the N-terminal Met of newly synthesized proteins. Requires at least a dipeptide for an efficient rate of reaction. N-terminal L-methionine is a prerequisite for activity but the enzyme has broad specificity at other positions. The sequence is that of Peptide deformylase from Shouchella clausii (strain KSM-K16) (Alkalihalobacillus clausii).